The chain runs to 645 residues: Translation factor GUF1, mitochondrial (645 aa).

Residues 44-228 (ENYRNFSIVA…AIIDRIPPPT (185 aa)) enclose the tr-type G domain. Residues 53 to 60 (AHVDHGKS), 120 to 124 (DTPGH), and 174 to 177 (NKID) each bind GTP.

It belongs to the TRAFAC class translation factor GTPase superfamily. Classic translation factor GTPase family. LepA subfamily.

Its subcellular location is the mitochondrion inner membrane. The enzyme catalyses GTP + H2O = GDP + phosphate + H(+). Its function is as follows. Promotes mitochondrial protein synthesis. May act as a fidelity factor of the translation reaction, by catalyzing a one-codon backward translocation of tRNAs on improperly translocated ribosomes. Binds to mitochondrial ribosomes in a GTP-dependent manner. The protein is Translation factor GUF1, mitochondrial of Saccharomyces cerevisiae (strain ATCC 204508 / S288c) (Baker's yeast).